The following is a 327-amino-acid chain: 2-phosphoglycerate kinase (327 aa).

The segment covering M1–R20 has biased composition (basic and acidic residues). A disordered region spans residues M1–I27. The ATP-cone domain occupies R25–E111.

The protein belongs to the 2-phosphoglycerate kinase family. A divalent metal cation is required as a cofactor.

The enzyme catalyses (2R)-2-phosphoglycerate + ATP = (2R)-2,3-bisphosphoglycerate + ADP + H(+). Its pathway is thermoadapter biosynthesis; cyclic 2,3-diphosphoglycerate biosynthesis; cyclic 2,3-diphosphoglycerate from 2-phospho-D-glycerate: step 1/2. Its function is as follows. Catalyzes the phosphorylation of 2-phosphoglycerate to 2,3-diphosphoglycerate. Involved in the biosynthesis of cyclic 2,3-bisphosphoglycerate, a thermoprotectant. This chain is 2-phosphoglycerate kinase, found in Methanopyrus kandleri (strain AV19 / DSM 6324 / JCM 9639 / NBRC 100938).